Here is a 141-residue protein sequence, read N- to C-terminus: Large ribosomal subunit protein bL17 (141 aa).

The protein belongs to the bacterial ribosomal protein bL17 family. In terms of assembly, part of the 50S ribosomal subunit. Contacts protein L32.

The sequence is that of Large ribosomal subunit protein bL17 from Chlamydia trachomatis serovar D (strain ATCC VR-885 / DSM 19411 / UW-3/Cx).